The chain runs to 140 residues: Interleukin-4 (140 aa).

A signal peptide spans 1 to 20 (MGLNPQLVVILLFFLECTRS). 3 disulfide bridges follow: Cys-25-Cys-107, Cys-47-Cys-87, and Cys-69-Cys-114. N-linked (GlcNAc...) asparagine glycans are attached at residues Asn-61, Asn-91, and Asn-117.

It belongs to the IL-4/IL-13 family. In terms of assembly, interacts with IL4R. Interacts with IL13RA1.

The protein resides in the secreted. In terms of biological role, cytokine secreted primarily by mast cells, T-cells, eosinophils, and basophils that plays a role in regulating antibody production, hematopoiesis and inflammation, and the development of effector T-cell responses. Induces the expression of class II MHC molecules on resting B-cells. Enhances both secretion and cell surface expression of IgE and IgG1. Also regulates the expression of the low affinity Fc receptor for IgE (CD23) on both lymphocytes and monocytes. Positively regulates IL31RA expression in macrophages. Stimulates autophagy in dendritic cells by interfering with mTORC1 signaling and through the induction of RUFY4. In addition, plays a critical role in higher functions of the normal brain, such as memory and learning. Upon binding to IL4, IL4R receptor dimerizes either with the common IL2R gamma chain/IL2RG to produce the type 1 signaling complex, located mainly on hematopoietic cells, or with the IL13RA1 to produce the type 2 complex, which is also expressed on nonhematopoietic cells. Engagement of both types of receptors initiates JAK3 and to a lower extend JAK1 phosphorylation leading to activation of the signal transducer and activator of transcription 6/STAT6. In Mus musculus (Mouse), this protein is Interleukin-4 (Il4).